Here is a 205-residue protein sequence, read N- to C-terminus: Leucyl/phenylalanyl-tRNA--protein transferase (205 aa).

Belongs to the L/F-transferase family.

It is found in the cytoplasm. The enzyme catalyses N-terminal L-lysyl-[protein] + L-leucyl-tRNA(Leu) = N-terminal L-leucyl-L-lysyl-[protein] + tRNA(Leu) + H(+). The catalysed reaction is N-terminal L-arginyl-[protein] + L-leucyl-tRNA(Leu) = N-terminal L-leucyl-L-arginyl-[protein] + tRNA(Leu) + H(+). It carries out the reaction L-phenylalanyl-tRNA(Phe) + an N-terminal L-alpha-aminoacyl-[protein] = an N-terminal L-phenylalanyl-L-alpha-aminoacyl-[protein] + tRNA(Phe). In terms of biological role, functions in the N-end rule pathway of protein degradation where it conjugates Leu, Phe and, less efficiently, Met from aminoacyl-tRNAs to the N-termini of proteins containing an N-terminal arginine or lysine. The chain is Leucyl/phenylalanyl-tRNA--protein transferase from Mesorhizobium japonicum (strain LMG 29417 / CECT 9101 / MAFF 303099) (Mesorhizobium loti (strain MAFF 303099)).